Here is a 339-residue protein sequence, read N- to C-terminus: Glucokinase (339 aa).

Gly16–Thr21 lines the ATP pocket.

The protein belongs to the bacterial glucokinase family.

It is found in the cytoplasm. It catalyses the reaction D-glucose + ATP = D-glucose 6-phosphate + ADP + H(+). The sequence is that of Glucokinase from Sinorhizobium medicae (strain WSM419) (Ensifer medicae).